The primary structure comprises 492 residues: N-succinylglutamate 5-semialdehyde dehydrogenase (492 aa).

An NAD(+)-binding site is contributed by 220-225 (GSANTG). Active-site residues include Glu243 and Cys277.

The protein belongs to the aldehyde dehydrogenase family. AstD subfamily.

The enzyme catalyses N-succinyl-L-glutamate 5-semialdehyde + NAD(+) + H2O = N-succinyl-L-glutamate + NADH + 2 H(+). The protein operates within amino-acid degradation; L-arginine degradation via AST pathway; L-glutamate and succinate from L-arginine: step 4/5. Functionally, catalyzes the NAD-dependent reduction of succinylglutamate semialdehyde into succinylglutamate. The sequence is that of N-succinylglutamate 5-semialdehyde dehydrogenase from Shigella flexneri.